A 32-amino-acid polypeptide reads, in one-letter code: Protamine-3A (32 aa).

The interval 1–32 (PRRRRRSSSRPIRRRRRPRVSRRRRRGGRRRR) is disordered.

Testis.

It is found in the nucleus. Its subcellular location is the chromosome. Functionally, protamines substitute for histones in the chromatin of sperm during the haploid phase of spermatogenesis. They compact sperm DNA into a highly condensed, stable and inactive complex. The protein is Protamine-3A of Oncorhynchus mykiss (Rainbow trout).